The chain runs to 121 residues: Large-conductance mechanosensitive channel (121 aa).

A run of 2 helical transmembrane segments spans residues 14–34 (VLDL…VKSL) and 67–87 (GAFL…FVLI).

Belongs to the MscL family. Homopentamer.

It localises to the cell membrane. Channel that opens in response to stretch forces in the membrane lipid bilayer. May participate in the regulation of osmotic pressure changes within the cell. This Lactococcus lactis subsp. cremoris (strain SK11) protein is Large-conductance mechanosensitive channel.